Reading from the N-terminus, the 386-residue chain is Succinate--CoA ligase [ADP-forming] subunit beta (386 aa).

ATP-binding positions include Lys46, 53-55, Glu99, Ala102, and Glu107; that span reads GRG. Mg(2+)-binding residues include Asn199 and Asp213. Substrate-binding positions include Asn264 and 321-323; that span reads GIV.

Belongs to the succinate/malate CoA ligase beta subunit family. In terms of assembly, heterotetramer of two alpha and two beta subunits. Mg(2+) is required as a cofactor.

The catalysed reaction is succinate + ATP + CoA = succinyl-CoA + ADP + phosphate. It catalyses the reaction GTP + succinate + CoA = succinyl-CoA + GDP + phosphate. Its pathway is carbohydrate metabolism; tricarboxylic acid cycle; succinate from succinyl-CoA (ligase route): step 1/1. Its function is as follows. Succinyl-CoA synthetase functions in the citric acid cycle (TCA), coupling the hydrolysis of succinyl-CoA to the synthesis of either ATP or GTP and thus represents the only step of substrate-level phosphorylation in the TCA. The beta subunit provides nucleotide specificity of the enzyme and binds the substrate succinate, while the binding sites for coenzyme A and phosphate are found in the alpha subunit. This chain is Succinate--CoA ligase [ADP-forming] subunit beta, found in Actinobacillus succinogenes (strain ATCC 55618 / DSM 22257 / CCUG 43843 / 130Z).